Consider the following 299-residue polypeptide: Bifunctional protein FolD (299 aa).

Residues 168 to 170 (GRS), serine 193, and isoleucine 234 each bind NADP(+).

It belongs to the tetrahydrofolate dehydrogenase/cyclohydrolase family. In terms of assembly, homodimer.

It catalyses the reaction (6R)-5,10-methylene-5,6,7,8-tetrahydrofolate + NADP(+) = (6R)-5,10-methenyltetrahydrofolate + NADPH. It carries out the reaction (6R)-5,10-methenyltetrahydrofolate + H2O = (6R)-10-formyltetrahydrofolate + H(+). It functions in the pathway one-carbon metabolism; tetrahydrofolate interconversion. Its function is as follows. Catalyzes the oxidation of 5,10-methylenetetrahydrofolate to 5,10-methenyltetrahydrofolate and then the hydrolysis of 5,10-methenyltetrahydrofolate to 10-formyltetrahydrofolate. The polypeptide is Bifunctional protein FolD (Agrobacterium fabrum (strain C58 / ATCC 33970) (Agrobacterium tumefaciens (strain C58))).